A 905-amino-acid chain; its full sequence is Chitin synthase 3B (905 aa).

Basic and acidic residues predominate over residues 1-10 (MAYNGRDQEY). A disordered region spans residues 1–136 (MAYNGRDQEY…GGGGGLGRSK (136 aa)). Over residues 81-93 (GPTGYGDTGGSFG) the composition is skewed to gly residues. A glycan (N-linked (GlcNAc...) asparagine) is linked at N536. The chain crosses the membrane as a helical span at residues 562–584 (MFFLHIQLIYTTLNTMFAWFSLG). Residue N601 is glycosylated (N-linked (GlcNAc...) asparagine). 6 helical membrane passes run 618 to 638 (IVNALLQYLYLAFVMLQFILA), 653 to 673 (SFMVFGLIQGYILVLSAYLVV), 705 to 725 (VILVALITIYGLNFIASFMYL), 733 to 753 (SFPYYLVLMSTYINILMVYAF), 832 to 852 (TGLVVCWLFGNILLIVCITST), and 873 to 893 (FLLYATAVLSLVRFFGFLWFL).

The protein belongs to the chitin synthase family. Class III subfamily.

The protein localises to the cell membrane. It carries out the reaction [(1-&gt;4)-N-acetyl-beta-D-glucosaminyl](n) + UDP-N-acetyl-alpha-D-glucosamine = [(1-&gt;4)-N-acetyl-beta-D-glucosaminyl](n+1) + UDP + H(+). Its function is as follows. Polymerizes chitin, a structural polymer of the cell wall and septum, by transferring the sugar moiety of UDP-GlcNAc to the non-reducing end of the growing chitin polymer. Plays essential functions in fungal survival and host infection. The polypeptide is Chitin synthase 3B (Gibberella zeae (strain ATCC MYA-4620 / CBS 123657 / FGSC 9075 / NRRL 31084 / PH-1) (Wheat head blight fungus)).